Consider the following 1243-residue polypeptide: Protein MMS22-like (1243 aa).

Belongs to the MMS22 family. MMS22L subfamily. Component of the MMS22L-TONSL complex.

It is found in the nucleus. Its subcellular location is the chromosome. Its function is as follows. Component of the MMS22L-TONSL complex, a complex that promotes homologous recombination-mediated repair of double-strand breaks (DSBs) at stalled or collapsed replication forks. The MMS22L-TONSL complex is required to maintain genome integrity during DNA replication. It mediates the assembly of RAD51 filaments on single-stranded DNA (ssDNA): the MMS22L-TONSL complex is recruited to DSBs following histone replacement by histone chaperones and eviction of the replication protein A complex (RPA/RP-A) from DSBs. Following recruitment to DSBs, the TONSL-MMS22L complex promotes recruitment of RAD51 filaments and subsequent homologous recombination. Within the complex, MMS22L acts by binding ssDNA. This Gallus gallus (Chicken) protein is Protein MMS22-like (MMS22L).